The following is a 350-amino-acid chain: 4-hydroxy-2-oxovalerate aldolase 2 (350 aa).

In terms of domain architecture, Pyruvate carboxyltransferase spans 8-260 (ITVHDMTLRD…ETGVDVFKIQ (253 aa)). 16–17 (RD) contacts substrate. D17 serves as a coordination point for Mn(2+). The Proton acceptor role is filled by H20. Residues S170 and H199 each coordinate substrate. Mn(2+)-binding residues include H199 and H201. Y290 serves as a coordination point for substrate.

Belongs to the 4-hydroxy-2-oxovalerate aldolase family.

The enzyme catalyses (S)-4-hydroxy-2-oxopentanoate = acetaldehyde + pyruvate. The chain is 4-hydroxy-2-oxovalerate aldolase 2 (tesG) from Comamonas testosteroni (Pseudomonas testosteroni).